A 541-amino-acid polypeptide reads, in one-letter code: Formimidoyltransferase-cyclodeaminase (541 aa).

The tract at residues 1–181 (MSQLVECVPN…GATVAGARKF (181 aa)) is formiminotransferase N-subdomain. The active-site For formimidoyltransferase activity is the His82. A folate-binding site is contributed by 163–172 (GPSAFVPSWG). Residues 182-326 (LLAFNINLLS…PKERIIEYLV (145 aa)) form a formiminotransferase C-subdomain region. A linker region spans residues 327–334 (PEAGPEQS). A cyclodeaminase/cyclohydrolase region spans residues 335-541 (LLHKPLRTFV…VLDRLEARQA (207 aa)). Asp412 functions as the For cyclodeaminase activity in the catalytic mechanism. Ser520 is modified (phosphoserine).

This sequence in the C-terminal section; belongs to the cyclodeaminase/cyclohydrolase family. The protein in the N-terminal section; belongs to the formiminotransferase family. In terms of assembly, homooctamer, including four polyglutamate binding sites. The subunits are arranged as a tetramer of dimers, and form a planar ring-shaped structure.

Its subcellular location is the cytoplasm. The protein resides in the cytosol. It localises to the golgi apparatus. The protein localises to the cytoskeleton. It is found in the microtubule organizing center. Its subcellular location is the centrosome. The protein resides in the centriole. It catalyses the reaction 5-formimidoyltetrahydrofolate + L-glutamate = N-formimidoyl-L-glutamate + (6S)-5,6,7,8-tetrahydrofolate. It carries out the reaction 5-formimidoyltetrahydrofolate + 2 H(+) = (6R)-5,10-methenyltetrahydrofolate + NH4(+). The protein operates within amino-acid degradation; L-histidine degradation into L-glutamate; L-glutamate from N-formimidoyl-L-glutamate (transferase route): step 1/1. In terms of biological role, folate-dependent enzyme, that displays both transferase and deaminase activity. Serves to channel one-carbon units from formiminoglutamate to the folate pool. Its function is as follows. Binds and promotes bundling of vimentin filaments originating from the Golgi. The chain is Formimidoyltransferase-cyclodeaminase (FTCD) from Sus scrofa (Pig).